Consider the following 970-residue polypeptide: Unconventional myosin-XIX (970 aa).

One can recognise a Myosin motor domain in the interval 35–758 (YKLDDLTRVN…MLELLECGRA (724 aa)). 132 to 139 (GESGAGKT) lines the ATP pocket. The segment at 602 to 624 (LEQLLQVLHSTTPHYIRCIKPNS) is actin-binding. Ser685 bears the Phosphoserine mark. IQ domains are found at residues 759–779 (RVLEQCARCIQGGWRRHRHRE) and 783–812 (QWRAVMLIQAAIRSWLTRKHIQRLHAAATV). Residues 824 to 970 (MACLAAKELD…VTSSAFTGLG (147 aa)) are myMOMA region.

It belongs to the TRAFAC class myosin-kinesin ATPase superfamily. Myosin family. Myosin is a hexamer of 2 heavy chains and 4 light chains: interacts with myosin light chains MYL9 and MYL12B. As to expression, widely expressed in multiple tissues and cell lines.

Its subcellular location is the mitochondrion outer membrane. It is found in the cytoplasm. It localises to the cytoskeleton. In terms of biological role, actin-based motor molecule with ATPase activity that localizes to the mitochondrion outer membrane. Motor protein that moves towards the plus-end of actin filaments. Required for mitochondrial inheritance during mitosis. May be involved in mitochondrial transport or positioning. This Homo sapiens (Human) protein is Unconventional myosin-XIX.